The following is a 445-amino-acid chain: Phosphoglucosamine mutase (445 aa).

S102 functions as the Phosphoserine intermediate in the catalytic mechanism. Positions 102, 241, 243, and 245 each coordinate Mg(2+). At S102 the chain carries Phosphoserine.

It belongs to the phosphohexose mutase family. The cofactor is Mg(2+). Post-translationally, activated by phosphorylation.

The enzyme catalyses alpha-D-glucosamine 1-phosphate = D-glucosamine 6-phosphate. Functionally, catalyzes the conversion of glucosamine-6-phosphate to glucosamine-1-phosphate. This chain is Phosphoglucosamine mutase, found in Cronobacter sakazakii (strain ATCC BAA-894) (Enterobacter sakazakii).